We begin with the raw amino-acid sequence, 244 residues long: Phosphoadenosine 5'-phosphosulfate reductase (244 aa).

Residue cysteine 239 is the Nucleophile; cysteine thiosulfonate intermediate of the active site.

Belongs to the PAPS reductase family. CysH subfamily.

It is found in the cytoplasm. It carries out the reaction [thioredoxin]-disulfide + sulfite + adenosine 3',5'-bisphosphate + 2 H(+) = [thioredoxin]-dithiol + 3'-phosphoadenylyl sulfate. The protein operates within sulfur metabolism; hydrogen sulfide biosynthesis; sulfite from sulfate: step 3/3. In terms of biological role, catalyzes the formation of sulfite from phosphoadenosine 5'-phosphosulfate (PAPS) using thioredoxin as an electron donor. This Enterobacter sp. (strain 638) protein is Phosphoadenosine 5'-phosphosulfate reductase.